We begin with the raw amino-acid sequence, 160 residues long: Arsenate reductase 2.1 (160 aa).

Residues 42 to 143 (SNPRVAIIDV…WELSGQPVCR (102 aa)) form the Rhodanese domain. The active-site Cysteine persulfide intermediate is the Cys-94.

The catalysed reaction is [glutaredoxin]-dithiol + arsenate + glutathione + H(+) = glutathionyl-S-S-[glutaredoxin] + arsenite + H2O. Possesses arsenate reductase activity in vitro. Catalyzes the reduction of arsenate [As(V)] to arsenite [As(III)]. May play a role in arsenic retention in roots. Functionally, possesses phosphatase activity towards p-nitrophenyl phosphate in vitro. In Oryza sativa subsp. japonica (Rice), this protein is Arsenate reductase 2.1 (ACR2.1).